Here is a 452-residue protein sequence, read N- to C-terminus: Flavanone 7-O-glucoside 2''-O-beta-L-rhamnosyltransferase (452 aa).

The active-site Proton acceptor is the His-21. His-21 contacts an anthocyanidin. The active-site Charge relay is the Asp-121. A helical membrane pass occupies residues 136-156 (IAAILFLPLSAVACSFLLHNI). UDP-beta-L-rhamnose contacts are provided by Ser-268, Val-330, His-347, Gly-351, Ser-352, and Glu-355. A coiled-coil region spans residues 407 to 436 (KHVVLQEEAKQIRRKANEISESMKKIGDAE).

The protein belongs to the UDP-glycosyltransferase family. As to quaternary structure, monomer. Expressed in young fruits and leaves.

It is found in the membrane. It carries out the reaction flavanone 7-O-beta-D-glucoside + UDP-beta-L-rhamnose = flavanone 7-O-[alpha-L-rhamnosyl-(1-&gt;2)-beta-D-glucoside] + UDP + H(+). In terms of biological role, involved in the production of the bitter neohesperidosides in citrus. Shows a strict specificity for UDP-rhamnose as donor. The protein is Flavanone 7-O-glucoside 2''-O-beta-L-rhamnosyltransferase (C12RT1) of Citrus maxima (Pomelo).